Reading from the N-terminus, the 99-residue chain is Microcin E492 (99 aa).

An N-terminal signal peptide occupies residues methionine 1–alanine 15. A disordered region spans residues serine 80–serine 99. The segment covering glycine 87 to serine 99 has biased composition (low complexity). A Serine microcin E492 siderophore ester modification is found at serine 99.

This sequence belongs to the class IIa microcin family. In terms of assembly, multimer. Possibly forms a homodimer or a homotrimer. In terms of processing, the C-terminal Ser is modified by attachment to a siderophore similar to enterobactin, which can bind one atom of iron. The modification consists of an ester linkage of the serine carboxyl to O6 of a glucose which is linked by a C-glycosidic bond to the 5'-benzoyl of a linear triester of N-(2,3-dihydroxybenzoyl)serine. Presence of the siderophore ester increases the antibacterial activity of the protein.

Its function is as follows. Channel-forming bacteriocin. Forms cation-selective channels. Active on enterobacteria, with highest activity against E.coli. Not active on other Gram-negative bacteria, Gram-positive bacteria or fungi. The unmodified protein is active against E.coli and S.enteritidis. When the siderophore ester is present at Ser-99, antibacterial activity against these species is increased and activity is also detected against E.cloacae and K.pneumoniae. Neutralized by its immunity protein MceB. The polypeptide is Microcin E492 (Klebsiella pneumoniae).